The following is a 545-amino-acid chain: Mitogen-activated protein kinase kinase kinase mom-4 (545 aa).

Residues 1–21 show a composition bias toward low complexity; it reads MDTSPHSKPSSSSASQSSHSP. The tract at residues 1–35 is disordered; sequence MDTSPHSKPSSSSASQSSHSPSPAPVTAPRKTRDS. Residues 53-308 form the Protein kinase domain; that stretch reads NLNSHQLGRG…AECLQYFTAL (256 aa). ATP is bound by residues 59–67 and lysine 86; that span reads LGRGTYGIV. Aspartate 178 serves as the catalytic Proton acceptor. Residues 316–444 form a disordered region; sequence NVPLADANTN…PIDDRRDSNE (129 aa). Polar residues-rich tracts occupy residues 352–369 and 396–411; these read NGRT…QAVN and ASSS…QSEA.

This sequence belongs to the protein kinase superfamily. STE Ser/Thr protein kinase family. MAP kinase kinase kinase subfamily. Interacts with, and is activated by, tap-1. Mg(2+) serves as cofactor.

It catalyses the reaction L-seryl-[protein] + ATP = O-phospho-L-seryl-[protein] + ADP + H(+). The enzyme catalyses L-threonyl-[protein] + ATP = O-phospho-L-threonyl-[protein] + ADP + H(+). Its function is as follows. Part of the Wnt signaling pathway essential for the specification of the mesodermal cell fate in early embryos. Stimulates the wrm-1/lit-1-dependent phosphorylation of pop-1 and plays a role in the initial nuclear accumulation of wrm-1. This Caenorhabditis briggsae protein is Mitogen-activated protein kinase kinase kinase mom-4.